We begin with the raw amino-acid sequence, 494 residues long: MNAPVKPSKLIKGATGDWEIVIGLEVHAQVSSKSKLFSGASTEFGGDPNAHVSLVDAAMPGMLPVINEECVKQAVRSGLGLNAQINLRSTFDRKNYFYPDLPQGYQISQFKSPIVGEGEVQVDVADGDGVTVGIERLHLEQDAGKLLHDQNPTMSLVDLNRSGVALMEIVSKPDIRSADQAKAYVTKLRTILRYLGTCDGDMEKGSLRADVNVSVRKPGAPLGTRCEIKNVNSIRFIGQAIDYEARRQIGILEDGGSIDQETRLFDAGKGETRSMRSKEEAHDYRYFPDPDLLPLQFDQAFVDALKAELPELPDAKKARFIADFGLSADDAGVLVSERESAEFYETVLSKLADAGRDGKLAANWVINELFGRLNKEGVAIEASPVSTAQLAAIVDLIGEATISGKIAKELFEIVWQEGGDPRATVEARGMRQVTDTGAIEKVVDDIVNANPDKVAQAQAKPALIGWFVGQVMKSSGGKANPQTVNDLLKSKLGL.

It belongs to the GatB/GatE family. GatB subfamily. As to quaternary structure, heterotrimer of A, B and C subunits.

It catalyses the reaction L-glutamyl-tRNA(Gln) + L-glutamine + ATP + H2O = L-glutaminyl-tRNA(Gln) + L-glutamate + ADP + phosphate + H(+). It carries out the reaction L-aspartyl-tRNA(Asn) + L-glutamine + ATP + H2O = L-asparaginyl-tRNA(Asn) + L-glutamate + ADP + phosphate + 2 H(+). Its function is as follows. Allows the formation of correctly charged Asn-tRNA(Asn) or Gln-tRNA(Gln) through the transamidation of misacylated Asp-tRNA(Asn) or Glu-tRNA(Gln) in organisms which lack either or both of asparaginyl-tRNA or glutaminyl-tRNA synthetases. The reaction takes place in the presence of glutamine and ATP through an activated phospho-Asp-tRNA(Asn) or phospho-Glu-tRNA(Gln). The protein is Aspartyl/glutamyl-tRNA(Asn/Gln) amidotransferase subunit B of Rhodopseudomonas palustris (strain BisB18).